We begin with the raw amino-acid sequence, 586 residues long: Major facilitator superfamily domain-containing protein 6-like (586 aa).

Transmembrane regions (helical) follow at residues 50–70 (TLMG…AFLA) and 78–98 (ALLI…VLVP). Residues 133-160 (AQESASSHPAKRTAEVEMPGFRNPPGES) are disordered. Transmembrane regions (helical) follow at residues 246 to 266 (FILS…LEQV), 287 to 307 (LWVW…ALVG), 326 to 346 (GYSV…IPIC), 361 to 381 (IVGG…VGAI), 400 to 420 (ELVM…LHPF), 433 to 455 (LVGL…WSWW), 456 to 476 (SVLP…WAVG), 499 to 519 (FYGS…MRFS), and 521 to 541 (AVLY…LLSI).

This sequence belongs to the major facilitator superfamily. MFSD6 family.

The protein localises to the membrane. The polypeptide is Major facilitator superfamily domain-containing protein 6-like (MFSD6L) (Homo sapiens (Human)).